The sequence spans 578 residues: Probable multidrug ABC transporter ATP-binding protein YbhF (578 aa).

2 ABC transporter domains span residues 6-237 (ITLN…LMTS) and 330-559 (IEAK…PDPT). Residues 40-47 (GPDGAGKT) and 362-369 (GPNGAGKS) contribute to the ATP site.

Belongs to the ABC transporter superfamily. The complex is probably composed of two ATP-binding proteins (YbhF) and two transmembrane proteins (YbhR and YbhS).

Its function is as follows. Part of the ABC transporter complex YbhFSR that could be involved in efflux of cefoperazone. Probably responsible for energy coupling to the transport system. In Escherichia coli (strain K12), this protein is Probable multidrug ABC transporter ATP-binding protein YbhF (ybhF).